The chain runs to 482 residues: tRNA sulfurtransferase (482 aa).

The THUMP domain maps to 61–165; the sequence is LTIRDALTRI…DDRLLLIKGR (105 aa). ATP-binding positions include 183–184, lysine 265, glycine 287, and glutamine 296; that span reads LI. Cysteine 344 and cysteine 456 are disulfide-bonded. The 79-residue stretch at 404–482 folds into the Rhodanese domain; sequence FGPNDVILDI…GFNNVKVYRP (79 aa). Catalysis depends on cysteine 456, which acts as the Cysteine persulfide intermediate.

Belongs to the ThiI family.

It localises to the cytoplasm. The enzyme catalyses [ThiI sulfur-carrier protein]-S-sulfanyl-L-cysteine + a uridine in tRNA + 2 reduced [2Fe-2S]-[ferredoxin] + ATP + H(+) = [ThiI sulfur-carrier protein]-L-cysteine + a 4-thiouridine in tRNA + 2 oxidized [2Fe-2S]-[ferredoxin] + AMP + diphosphate. The catalysed reaction is [ThiS sulfur-carrier protein]-C-terminal Gly-Gly-AMP + S-sulfanyl-L-cysteinyl-[cysteine desulfurase] + AH2 = [ThiS sulfur-carrier protein]-C-terminal-Gly-aminoethanethioate + L-cysteinyl-[cysteine desulfurase] + A + AMP + 2 H(+). The protein operates within cofactor biosynthesis; thiamine diphosphate biosynthesis. Its function is as follows. Catalyzes the ATP-dependent transfer of a sulfur to tRNA to produce 4-thiouridine in position 8 of tRNAs, which functions as a near-UV photosensor. Also catalyzes the transfer of sulfur to the sulfur carrier protein ThiS, forming ThiS-thiocarboxylate. This is a step in the synthesis of thiazole, in the thiamine biosynthesis pathway. The sulfur is donated as persulfide by IscS. The polypeptide is tRNA sulfurtransferase (Shigella flexneri).